A 140-amino-acid polypeptide reads, in one-letter code: MRLSWILTILSICLSALAAATGAEGKRKLQIGVKKRVDHCPIKSRKGDVLHMHYTGKLEDGTEFDSSLPQNQPFVFSLGTGQVIKGWDQGLLGMCEGEKRKLVIPSELGYGERGAPPKIPGGATLVFEVELLKIERRSEL.

A signal peptide spans 1 to 22; it reads MRLSWILTILSICLSALAAATG. The 89-residue stretch at 47–135 folds into the PPIase FKBP-type domain; sequence GDVLHMHYTG…VFEVELLKIE (89 aa). The Prevents secretion from ER signature appears at 137–140; sequence RSEL.

This sequence belongs to the FKBP-type PPIase family. FKBP2 subfamily. Interacts with ARFGEF1/BIG1 and the C-terminal of EPB41L2.

It is found in the endoplasmic reticulum membrane. It carries out the reaction [protein]-peptidylproline (omega=180) = [protein]-peptidylproline (omega=0). With respect to regulation, inhibited by both FK506 and rapamycin. Its function is as follows. PPIases accelerate the folding of proteins. It catalyzes the cis-trans isomerization of proline imidic peptide bonds in oligopeptides. The polypeptide is Peptidyl-prolyl cis-trans isomerase FKBP2 (Fkbp2) (Mus musculus (Mouse)).